A 400-amino-acid polypeptide reads, in one-letter code: MAPLSQLSGHLNYTCGVENSTGASQARPHAYYALSYCALILAIVFGNGLVCMAVLKERALQTTTNYLVVSLAVADLLVATLVMPWVVYLEVTGGVWNFSRVCCDVFVTLDVMMCTASILNLCAISIDRYTAVVMPVHYQHGTGQSSCRRVTLMITAVWVLAFAVSCPLLFGFNTTGDPTVCSISNPDFVIYSSVVSFYLPFGVTVLVYARIYVVLKQRRRKRILTRQNSQCNSVRPGFPQQTLSPDRAHLELKRYYSICQDTALGGPGFQERGGELKREERTRNSLSPTIAPKLSLEVRKLSNGRLSTSLKLGPLQPRGVPLREKKATQMVAIVLGAFIVCWLPFFLTHVLNTHCQTCHVSPELYSATTWLGYVNSALNPVIYTTFNIEFRKAFLKILSC.

Residues 1–32 (MAPLSQLSGHLNYTCGVENSTGASQARPHAYY) are Extracellular-facing. Residues asparagine 12 and asparagine 19 are each glycosylated (N-linked (GlcNAc...) asparagine). The chain crosses the membrane as a helical span at residues 33–55 (ALSYCALILAIVFGNGLVCMAVL). The Cytoplasmic portion of the chain corresponds to 56-65 (KERALQTTTN). A helical membrane pass occupies residues 66–88 (YLVVSLAVADLLVATLVMPWVVY). Residues 89–104 (LEVTGGVWNFSRVCCD) lie on the Extracellular side of the membrane. A glycan (N-linked (GlcNAc...) asparagine) is linked at asparagine 97. Cysteine 103 and cysteine 181 are disulfide-bonded. The helical transmembrane segment at 105 to 126 (VFVTLDVMMCTASILNLCAISI) threads the bilayer. Over 127–149 (DRYTAVVMPVHYQHGTGQSSCRR) the chain is Cytoplasmic. The chain crosses the membrane as a helical span at residues 150 to 170 (VTLMITAVWVLAFAVSCPLLF). Residues 171–187 (GFNTTGDPTVCSISNPD) lie on the Extracellular side of the membrane. Asparagine 173 carries N-linked (GlcNAc...) asparagine glycosylation. A helical transmembrane segment spans residues 188–209 (FVIYSSVVSFYLPFGVTVLVYA). Topologically, residues 210-329 (RIYVVLKQRR…VPLREKKATQ (120 aa)) are cytoplasmic. The chain crosses the membrane as a helical span at residues 330–351 (MVAIVLGAFIVCWLPFFLTHVL). At 352-366 (NTHCQTCHVSPELYS) the chain is on the extracellular side. Cysteine 355 and cysteine 358 form a disulfide bridge. The helical transmembrane segment at 367–386 (ATTWLGYVNSALNPVIYTTF) threads the bilayer. Topologically, residues 387–400 (NIEFRKAFLKILSC) are cytoplasmic.

Belongs to the G-protein coupled receptor 1 family. Interacts with CLIC6. Interacts with GRK4. Interacts with PALM. Interacts with FLNA (via filamin repeat 21); increases PKA-mediated phosphorylation of FLNA. Post-translationally, phosphorylated by GRK4. Palmitoylated.

The protein resides in the cell membrane. In terms of biological role, dopamine receptor whose activity is mediated by G proteins which inhibit adenylyl cyclase. Promotes cell proliferation. The polypeptide is D(3) dopamine receptor (DRD3) (Chlorocebus aethiops (Green monkey)).